Consider the following 247-residue polypeptide: Small ribosomal subunit protein uS2 (247 aa).

This sequence belongs to the universal ribosomal protein uS2 family.

This chain is Small ribosomal subunit protein uS2, found in Fusobacterium nucleatum subsp. nucleatum (strain ATCC 25586 / DSM 15643 / BCRC 10681 / CIP 101130 / JCM 8532 / KCTC 2640 / LMG 13131 / VPI 4355).